Here is a 236-residue protein sequence, read N- to C-terminus: CHD1 helical C-terminal domain containing protein 1 (236 aa).

The disordered stretch occupies residues 1–29; the sequence is MEASDWQGGEGDKPLEKVGSVPCLERSSS. Positions 44–145 are CHD1 helical C-terminal domain (CHCT); it reads LSQDTFKICK…TNQTAKFLAA (102 aa). A disordered region spans residues 197 to 236; that stretch reads LEEPRSSHCSRGDSLRKLPQKPKLKKKRIKERLESPKSCS. Basic and acidic residues predominate over residues 198 to 212; sequence EEPRSSHCSRGDSLR. Positions 214 to 226 are enriched in basic residues; that stretch reads LPQKPKLKKKRIK. Positions 227–236 are enriched in basic and acidic residues; the sequence is ERLESPKSCS.

As to expression, exclusively expressed in testes.

It localises to the cytoplasm. It is found in the nucleus. In terms of biological role, may play a role in regulation of apoptosis. In Mus musculus (Mouse), this protein is CHD1 helical C-terminal domain containing protein 1 (Chct1).